Reading from the N-terminus, the 152-residue chain is Superoxide dismutase [Cu-Zn] 1 (152 aa).

Residues H45, H47, and H62 each coordinate Cu cation. A disulfide bridge links C56 with C145. Zn(2+) contacts are provided by H62, H70, H79, and D82. Position 119 (H119) interacts with Cu cation.

Belongs to the Cu-Zn superoxide dismutase family. As to quaternary structure, homodimer. Interacts with DJ1A and CCS. Requires Cu cation as cofactor. Zn(2+) serves as cofactor. In terms of tissue distribution, expressed in leaves (at protein level). The spatial localization is regulated by miR398-mediated silencing. Mostly present in flowers, old rosette leaves and inflorescence, and, to a lower extent, in cauline leaves, stems and roots.

It localises to the cytoplasm. Its subcellular location is the cytosol. It is found in the nucleus. The enzyme catalyses 2 superoxide + 2 H(+) = H2O2 + O2. In terms of biological role, destroys radicals which are normally produced within the cells and which are toxic to biological systems. In Arabidopsis thaliana (Mouse-ear cress), this protein is Superoxide dismutase [Cu-Zn] 1 (CSD1).